The sequence spans 434 residues: CCA tRNA nucleotidyltransferase 1, mitochondrial (434 aa).

The transit peptide at 1–41 directs the protein to the mitochondrion; it reads MQSVLYPWHRQVLRCSWSRLCLLKRYLFTMKLQSPEFQSLF. Residues G64 and R67 each coordinate ATP. CTP contacts are provided by G64 and R67. Mg(2+) is bound by residues D77 and D79. R151, D194, R197, R200, and R203 together coordinate ATP. CTP contacts are provided by R151, D194, R197, R200, and R203. Position 400 is a phosphoserine (S400). Position 402 is an N6-acetyllysine (K402).

Belongs to the tRNA nucleotidyltransferase/poly(A) polymerase family. In terms of assembly, monomer, and homodimer. It depends on Mg(2+) as a cofactor.

The protein resides in the mitochondrion. The protein localises to the cytoplasm. It localises to the nucleus. It catalyses the reaction a tRNA precursor + 2 CTP + ATP = a tRNA with a 3' CCA end + 3 diphosphate. It carries out the reaction a tRNA with a 3' CCA end + 2 CTP + ATP = a tRNA with a 3' CCACCA end + 3 diphosphate. In terms of biological role, nucleotidyltransferase that catalyzes the addition and repair of the essential 3'-terminal CCA sequence in tRNAs, which is necessary for the attachment of amino acids to the 3' terminus of tRNA molecules, using CTP and ATP as substrates. tRNA 3'-terminal CCA addition is required both for tRNA processing and repair. Promotes tRNA repair and recycling downstream of the ribosome-associated quality control (RQC) pathway by mediating addition of the tRNA 3'-terminal CCA following cleavage by ANKZF1 and repair by ELAC1. Also involved in tRNA surveillance by mediating tandem CCA addition to generate a CCACCA at the 3' terminus of unstable tRNAs and tRNA-like transcripts. While stable tRNAs receive only 3'-terminal CCA, unstable tRNAs beginning with GG are marked with CCACCA and rapidly degraded. The structural flexibility of RNA controls the choice between CCA versus CCACCA addition: following the first CCA addition cycle, nucleotide-binding to the active site triggers a clockwise screw motion, producing torque on the RNA. This ejects stable RNAs, whereas unstable RNAs are refolded while bound to the enzyme and subjected to a second CCA catalytic cycle. This chain is CCA tRNA nucleotidyltransferase 1, mitochondrial (Trnt1), found in Mus musculus (Mouse).